The following is a 365-amino-acid chain: Cytosolic 5'-nucleotidase 1A (365 aa).

A compositionally biased stretch (basic and acidic residues) spans 1 to 11 (MEPGQPREARE). A disordered region spans residues 1 to 23 (MEPGQPREAREPGPGAETAAVPR). Catalysis depends on D208, which acts as the Nucleophile.

The protein belongs to the 5'-nucleotidase type 3 family. It depends on Mg(2+) as a cofactor.

It is found in the cytoplasm. The catalysed reaction is a ribonucleoside 5'-phosphate + H2O = a ribonucleoside + phosphate. It carries out the reaction a 2'-deoxyribonucleoside 5'-phosphate + H2O = a 2'-deoxyribonucleoside + phosphate. The enzyme catalyses IMP + H2O = inosine + phosphate. It catalyses the reaction AMP + H2O = adenosine + phosphate. The catalysed reaction is dCMP + H2O = 2'-deoxycytidine + phosphate. With respect to regulation, activated by ADP. Catalyzes the hydrolysis of ribonucleotide and deoxyribonucleotide monophosphates, releasing inorganic phosphate and the corresponding nucleoside. AMP is the major substrate but can also hydrolyze dCMP and IMP. The protein is Cytosolic 5'-nucleotidase 1A (Nt5c1a) of Mus musculus (Mouse).